The chain runs to 643 residues: Sodium/iodide cotransporter (643 aa).

Residues 1 to 14 (MEAVETGERPTFGA) are Extracellular-facing. Residues 15–31 (WDYGVFALMLLVSTGIG) traverse the membrane as a helical segment. The Cytoplasmic portion of the chain corresponds to 32–56 (LWVGLARGGQRSAEDFFTGGRRLAA). A discontinuously helical transmembrane segment spans residues 57–80 (LPVGLSLSASFMSAVQVLGVPSEA). Na(+) contacts are provided by Ser69, Val71, and Gln72. Residue Val76 participates in iodide binding. The Extracellular segment spans residues 81–84 (YRYG). Residues 85 to 105 (LKFLWMCLGQLLNSVLTALLF) form a helical membrane-spanning segment. An iodide-binding site is contributed by Met90. Over 106 to 130 (MPVFYRLGLTSTYEYLEMRFSRAVR) the chain is Cytoplasmic. Residues 131–157 (LCGTLQYIVATMLYTGIVIYAPALILN) traverse the membrane as a helical segment. Tyr144 is a binding site for Na(+). Residues 158 to 163 (QVTGLD) lie on the Extracellular side of the membrane. A helical membrane pass occupies residues 164–181 (IWASLLSTGIICTFYTAV). Residues 182-189 (GGMKAVVW) lie on the Cytoplasmic side of the membrane. The helical transmembrane segment at 190–208 (TDVFQVVVMLSGFWVVLAR) threads the bilayer. Topologically, residues 209–243 (GVMLVGGPRQVLTLAQNHSRINLMDFNPDPRSRYT) are extracellular. Residues 244 to 266 (FWTFVVGGTLVWLSMYGVNQAQV) form a discontinuously helical membrane-spanning segment. An iodide-binding site is contributed by Trp255. Na(+) is bound at residue Met258. Over 267-278 (QRYVACRTEKQA) the chain is Cytoplasmic. The helical transmembrane segment at 279 to 301 (KLALLINQVGLFLIVSSAACCGI) threads the bilayer. Residues 302-335 (VMFVFYTDCDPLLLGRISAPDQYMPLLVLDIFED) are Extracellular-facing. The helical transmembrane segment at 336–363 (LPGVPGLFLACAYSGTLSTASTSINAMA) threads the bilayer. The Cytoplasmic portion of the chain corresponds to 364 to 386 (AVTVEDLIKPRLRSLAPRKLVII). A helical membrane pass occupies residues 387–408 (SKGLSLIYGSACLTVAALSSLL). The Extracellular segment spans residues 409–411 (GGG). Residues 412 to 437 (VLQGSFTVMGVISGPLLGAFILGMFL) form a helical membrane-spanning segment. Leu413 serves as a coordination point for iodide. Ser416 and Phe417 together coordinate Na(+). Residue Phe417 coordinates iodide. The Cytoplasmic segment spans residues 438–441 (PACN). The chain crosses the membrane as a helical span at residues 442 to 465 (TPGVLAGLGAGLALSLWVALGATL). Residues 466–525 (YPPSEQTMRVLPSSAARCVALSVNASGLLDPALLPANDSSRAPSSGMDASRPALADSFYA) are Extracellular-facing. Residues Asn489 and Asn502 are each glycosylated (N-linked (GlcNAc...) asparagine). A helical membrane pass occupies residues 526-550 (ISYLYYGALGTLTTVLCGALISCLT). The Cytoplasmic segment spans residues 551 to 643 (GPTKRSTLAP…GGRDQQETNL (93 aa)). Ser556 bears the Phosphoserine; by PKA mark. The disordered stretch occupies residues 623–643 (AGSWTPCVGHDGGRDQQETNL). Positions 633–643 (DGGRDQQETNL) are enriched in basic and acidic residues.

Belongs to the sodium:solute symporter (SSF) (TC 2.A.21) family. As to quaternary structure, monomer. In terms of processing, glycosylated. In terms of tissue distribution, expression is primarily in thyroid tissue, but also to a lower extent in mammary gland and ovary. Expression is reduced in tumors.

The protein localises to the cell membrane. It is found in the cytoplasm. It catalyses the reaction iodide(out) + 2 Na(+)(out) = iodide(in) + 2 Na(+)(in). The enzyme catalyses chlorate(out) + 2 Na(+)(out) = chlorate(in) + 2 Na(+)(in). It carries out the reaction thiocyanate(out) + 2 Na(+)(out) = thiocyanate(in) + 2 Na(+)(in). The catalysed reaction is nitrate(out) + 2 Na(+)(out) = nitrate(in) + 2 Na(+)(in). It catalyses the reaction selenocyanate(out) + 2 Na(+)(out) = selenocyanate(in) + 2 Na(+)(in). Dysidenin and perchlorate inhibit iodide transport activity. Oxyanions inhibit iodide transport activity by blocking the binding sites for iodide and one of the sodium ions. In terms of biological role, sodium:iodide symporter that mediates the transport of iodide into the thyroid gland. Can also mediate the transport of chlorate, thiocynate, nitrate and selenocynate. The protein is Sodium/iodide cotransporter (SLC5A5) of Homo sapiens (Human).